A 101-amino-acid polypeptide reads, in one-letter code: Iron-sulfur cluster assembly protein CyaY (101 aa).

This sequence belongs to the frataxin family.

Involved in iron-sulfur (Fe-S) cluster assembly. May act as a regulator of Fe-S biogenesis. The protein is Iron-sulfur cluster assembly protein CyaY of Rickettsia felis (strain ATCC VR-1525 / URRWXCal2) (Rickettsia azadi).